A 151-amino-acid polypeptide reads, in one-letter code: Small ribosomal subunit protein uS15 (151 aa).

A compositionally biased stretch (basic residues) spans 1-16 (MPHRSRHKKGRSRSVR). A disordered region spans residues 1–21 (MPHRSRHKKGRSRSVRPAHPT).

This sequence belongs to the universal ribosomal protein uS15 family. Part of the 30S ribosomal subunit.

This chain is Small ribosomal subunit protein uS15, found in Pyrobaculum islandicum (strain DSM 4184 / JCM 9189 / GEO3).